A 400-amino-acid chain; its full sequence is Queuine tRNA-ribosyltransferase catalytic subunit 1 (400 aa).

Catalysis depends on aspartate 103, which acts as the Proton acceptor. Queuine contacts are provided by residues 103–107, aspartate 157, glutamine 200, and glycine 227; that span reads DSGGF. Residues 258 to 264 form an RNA binding region; sequence GVGYAVD. Aspartate 277 acts as the Nucleophile in catalysis. Positions 282–286 are RNA binding; important for wobble base 34 recognition; the sequence is TRTAR. Residues cysteine 315, cysteine 317, cysteine 320, and histidine 345 each contribute to the Zn(2+) site.

The protein belongs to the queuine tRNA-ribosyltransferase family. In terms of assembly, heterodimer of a catalytic subunit qtrt1 and an accessory subunit qtrt2. It depends on Zn(2+) as a cofactor.

Its subcellular location is the cytoplasm. The protein resides in the mitochondrion outer membrane. It carries out the reaction guanosine(34) in tRNA + queuine = queuosine(34) in tRNA + guanine. Its function is as follows. Catalytic subunit of the queuine tRNA-ribosyltransferase (TGT) that catalyzes the base-exchange of a guanine (G) residue with queuine (Q) at position 34 (anticodon wobble position) in tRNAs with GU(N) anticodons (tRNA-Asp, -Asn, -His and -Tyr), resulting in the hypermodified nucleoside queuosine (7-(((4,5-cis-dihydroxy-2-cyclopenten-1-yl)amino)methyl)-7-deazaguanosine). Catalysis occurs through a double-displacement mechanism. The nucleophile active site attacks the C1' of nucleotide 34 to detach the guanine base from the RNA, forming a covalent enzyme-RNA intermediate. The proton acceptor active site deprotonates the incoming queuine, allowing a nucleophilic attack on the C1' of the ribose to form the product. This Danio rerio (Zebrafish) protein is Queuine tRNA-ribosyltransferase catalytic subunit 1.